A 213-amino-acid polypeptide reads, in one-letter code: Uridine kinase (213 aa).

Residue 13–20 (GGSCSGKT) participates in ATP binding.

It belongs to the uridine kinase family.

The protein resides in the cytoplasm. It carries out the reaction uridine + ATP = UMP + ADP + H(+). The catalysed reaction is cytidine + ATP = CMP + ADP + H(+). It participates in pyrimidine metabolism; CTP biosynthesis via salvage pathway; CTP from cytidine: step 1/3. Its pathway is pyrimidine metabolism; UMP biosynthesis via salvage pathway; UMP from uridine: step 1/1. The sequence is that of Uridine kinase (udk) from Mycoplasma pneumoniae (strain ATCC 29342 / M129 / Subtype 1) (Mycoplasmoides pneumoniae).